Reading from the N-terminus, the 159-residue chain is uncharacterized protein (159 aa).

The next 3 helical transmembrane spans lie at 17 to 37 (FFFF…NLSS), 44 to 64 (WLIV…PLPI), and 67 to 87 (FSGA…DLIA).

Its subcellular location is the membrane. This is an uncharacterized protein from Saccharomyces cerevisiae (strain ATCC 204508 / S288c) (Baker's yeast).